A 49-amino-acid polypeptide reads, in one-letter code: Large ribosomal subunit protein bL33A (49 aa).

This sequence belongs to the bacterial ribosomal protein bL33 family.

The protein is Large ribosomal subunit protein bL33A of Lactobacillus delbrueckii subsp. bulgaricus (strain ATCC 11842 / DSM 20081 / BCRC 10696 / JCM 1002 / NBRC 13953 / NCIMB 11778 / NCTC 12712 / WDCM 00102 / Lb 14).